A 154-amino-acid chain; its full sequence is MINEIQIAAFNAAYAKTIDSDAMEQWPTFFTKDCHYCVTNVDNHDEGLAAGIVWADSQDMLTDRISALREANIYERHRYRHILGLPSIQSGDATQASASTPFMVLRIMHTGETEVFASGEYLDKFTTIDGKLRLQERIAVCDSTVTDTLMALPL.

It belongs to the bacterial ring-hydroxylating dioxygenase beta subunit family. As to quaternary structure, heterotetramer composed of 2 alpha (TphA2I and TphA2II) and 2 beta (TphA3I and TphA3II) subunits. Part of a multicomponent enzyme system composed of a reductase (TphA1I or TphA1II) and a two-subunit oxygenase component (TphA2I or TphA2II and TphA3I or TphA3II). Fe cation is required as a cofactor.

It carries out the reaction terephthalate + NADH + O2 + H(+) = (3S,4R)-3,4-dihydroxycyclohexa-1,5-diene-1,4-dicarboxylate + NAD(+). Inhibited by EDTA. In terms of biological role, component of the terephthalate 1,2-dioxygenase multicomponent enzyme system which catalyzes the dioxygenation of terephthalate (TER/TPA) to 1,2-dihydroxy-3,5-cyclohexadiene-1,4-dicarboxylic acid (DCD). It can also use 2,5-dicarboxypyridine (PDC) and 1,4-napthalenedicarboxylic acid (NDC) as substrates, and preferentially uses NADPH which is the physiological electron donor. The sequence is that of Terephthalate 1,2-dioxygenase, terminal oxygenase component subunit beta 2 (tphA3II) from Comamonas sp.